A 372-amino-acid polypeptide reads, in one-letter code: Tubby-like F-box protein 9 (372 aa).

Positions 1–51 are disordered; the sequence is MALWRCSSSWLSSVSRSSGGVGGGESKVSPEIAPVSGGEGEGEEEEGEEER. The segment covering 7 to 18 has biased composition (low complexity); it reads SSSWLSSVSRSS. The segment covering 40–49 has biased composition (acidic residues); that stretch reads GEGEEEEGEE. One can recognise an F-box domain in the interval 50 to 105; the sequence is ERWSRLLPELLTEIMRRVDAGAERWPPRRDVVACACVCRRWRDAAVSVVRPPLECG.

It belongs to the TUB family. In terms of tissue distribution, ubiquitous.

The sequence is that of Tubby-like F-box protein 9 (TULP9) from Oryza sativa subsp. japonica (Rice).